The primary structure comprises 406 residues: MSIYKIPLPLNILEAARERITWTLNTLPRVCVSFSGGKDSGLMLHLTAELARQMGKKICVLFIDWEAQFSCTINYVQSLRELYTDVIEEFYWVALPLTTQNSLSQYQPEWQCWEPDVEWVRQPPQDAITDPDFFCFYQPGMTFEQFVREFAEWFSQKRPAAMMIGIRADESYNRFVAIASLNKQRFADDKPWTTAAPGGHSWYIYPIYDWKVADIWTWYANHQSLCNPLYNLMYQAGVPLRHMRICEPFGPEQRQGLWLYHVIEPDRWAAMCARVSGVKSGGIYAGHDNHFYGHRKILKPEHLDWQEYALLLLNSMPEKTAEHYRNKIAIYLHWYQKKGIEVPQTQQGDIGAKDIPSWRRICKVLLNNDYWCRALSFSPTKSKNYQRYNERIKGKRQEWGILCNND.

This is an uncharacterized protein from Escherichia coli (strain K12).